The sequence spans 272 residues: 3-methyl-2-oxobutanoate hydroxymethyltransferase (272 aa).

Positions 51 and 90 each coordinate Mg(2+). Residues 51–52 (DS), aspartate 90, and lysine 119 contribute to the 3-methyl-2-oxobutanoate site. Glutamate 121 is a binding site for Mg(2+). Glutamate 188 acts as the Proton acceptor in catalysis.

The protein belongs to the PanB family. In terms of assembly, homodecamer; pentamer of dimers. The cofactor is Mg(2+).

It is found in the cytoplasm. It catalyses the reaction 3-methyl-2-oxobutanoate + (6R)-5,10-methylene-5,6,7,8-tetrahydrofolate + H2O = 2-dehydropantoate + (6S)-5,6,7,8-tetrahydrofolate. It functions in the pathway cofactor biosynthesis; (R)-pantothenate biosynthesis; (R)-pantoate from 3-methyl-2-oxobutanoate: step 1/2. Its function is as follows. Catalyzes the reversible reaction in which hydroxymethyl group from 5,10-methylenetetrahydrofolate is transferred onto alpha-ketoisovalerate to form ketopantoate. The chain is 3-methyl-2-oxobutanoate hydroxymethyltransferase from Dechloromonas aromatica (strain RCB).